Reading from the N-terminus, the 412-residue chain is O-acetyl-L-homoserine sulfhydrylase 2 (412 aa).

Lysine 202 is subject to N6-(pyridoxal phosphate)lysine.

Belongs to the trans-sulfuration enzymes family. In terms of assembly, homotetramer. Requires pyridoxal 5'-phosphate as cofactor.

It carries out the reaction O-acetyl-L-homoserine + hydrogen sulfide = L-homocysteine + acetate. With respect to regulation, inhibited by the carbonyl reagents hydroxylamine and phenylhydrazine. Also inhibited by methionine and propargylglycine. Functionally, catalyzes the conversion of O-acetyl-L-homoserine (OAH) into homocysteine in the methionine biosynthesis pathway. Has weak activity with O-acetyl-L-serine, O-phospho-L-serine, L-serine, O-succinyl-L-homoserine and L-homoserine. Shows a very low CTT gamma-synthase activity. In Thermus thermophilus (strain ATCC 27634 / DSM 579 / HB8), this protein is O-acetyl-L-homoserine sulfhydrylase 2.